The sequence spans 973 residues: ATP-dependent DNA helicase homolog RECG1, chloroplastic/mitochondrial (973 aa).

The interval 1-208 (MAAVTLSPCS…ATSEVEATSD (208 aa)) is sufficient for chloroplastic and mitochondrial trgeting. The segment at 174–200 (LLQNDDSSDPREDILDDGSSFTSKTAT) is disordered. The Helicase ATP-binding domain maps to 536-725 (DLKRPVPMNR…LYGDISLTQI (190 aa)). An ATP-binding site is contributed by 549-556 (GDVGCGKT). A DEQQ box motif is present at residues 655–658 (DEQQ). A Helicase C-terminal domain is found at 746-904 (GIKEVYSMML…GFYLANIDLL (159 aa)).

The protein belongs to the helicase family. RecG subfamily. In terms of tissue distribution, expressed in most tissues, not seen in pollen, ovules or developing seeds.

It is found in the plastid. The protein localises to the chloroplast. The protein resides in the mitochondrion. It carries out the reaction Couples ATP hydrolysis with the unwinding of duplex DNA by translocating in the 3'-5' direction.. The enzyme catalyses ATP + H2O = ADP + phosphate + H(+). Functionally, plays a critical role in recombination and DNA repair. Helps process Holliday junction (HJ) intermediates to mature products by catalyzing branch migration. Has replication fork regression activity, unwinds stalled or blocked replication forks to make a HJ that can be resolved. Has a DNA unwinding activity characteristic of a DNA helicase with 3'-5' polarity. Its function is as follows. Plays a role in recombination surveillance and repair of double-stranded (ds)DNA breaks in the mitochondrion. May be able to dissociate D- and R-loops. Able to complement UV sensitivity of a recG deletion in E.coli. The polypeptide is ATP-dependent DNA helicase homolog RECG1, chloroplastic/mitochondrial (Arabidopsis thaliana (Mouse-ear cress)).